The sequence spans 762 residues: Serine/threonine-protein kinase PLK4 (762 aa).

In terms of domain architecture, Protein kinase spans 14 to 268 (YEVQHLLGKG…LEQVLRHPFM (255 aa)). Residues 20–28 (LGKGGFACV) and Lys43 contribute to the ATP site. Asp139 functions as the Proton acceptor in the catalytic mechanism. The region spanning 383–498 (AECISMPPLN…ARFVSLVKSK (116 aa)) is the Cryptic POLO box 1 (CPB1) domain. Residues 499-602 (TPKVTYFSGL…GRRPTPEVMP (104 aa)) enclose the Cryptic POLO box 2 (CPB2) domain. The region spanning 657-736 (PIKRLNVPGV…LPQVQMKLKS (80 aa)) is the POLO box domain.

This sequence belongs to the protein kinase superfamily. Ser/Thr protein kinase family. CDC5/Polo subfamily. Homodimer. In terms of processing, ubiquitinated by the SCF(Slimb) ubiquitin ligase complex; leading to its degradation by the proteasome during interphase and regulating centriole number and ensuring the block to centriole reduplication.

It is found in the cytoplasm. It localises to the cytoskeleton. The protein resides in the microtubule organizing center. Its subcellular location is the centrosome. The protein localises to the centriole. The enzyme catalyses L-seryl-[protein] + ATP = O-phospho-L-seryl-[protein] + ADP + H(+). It carries out the reaction L-threonyl-[protein] + ATP = O-phospho-L-threonyl-[protein] + ADP + H(+). Its function is as follows. Serine/threonine-protein kinase that plays a central role in centriole duplication. Able to trigger procentriole formation on the surface of the mother centriole cylinder, using mother centriole as a platform, leading to the recruitment of centriole biogenesis proteins such as sas-6. When overexpressed, it is able to induce centrosome amplification through the simultaneous generation of multiple procentrioles adjoining each parental centriole during S phase. Centrosome amplification following overexpression can initiate tumorigenesis, highlighting the importance of centrosome regulation in cancers. In Drosophila grimshawi (Hawaiian fruit fly), this protein is Serine/threonine-protein kinase PLK4 (SAK).